Consider the following 163-residue polypeptide: ATP synthase subunit b 1 (163 aa).

The helical transmembrane segment at 7-27 (PETWVAIAFVILMGLFAYLGV) threads the bilayer.

Belongs to the ATPase B chain family. In terms of assembly, F-type ATPases have 2 components, F(1) - the catalytic core - and F(0) - the membrane proton channel. F(1) has five subunits: alpha(3), beta(3), gamma(1), delta(1), epsilon(1). F(0) has three main subunits: a(1), b(2) and c(10-14). The alpha and beta chains form an alternating ring which encloses part of the gamma chain. F(1) is attached to F(0) by a central stalk formed by the gamma and epsilon chains, while a peripheral stalk is formed by the delta and b chains.

It is found in the cell inner membrane. Functionally, f(1)F(0) ATP synthase produces ATP from ADP in the presence of a proton or sodium gradient. F-type ATPases consist of two structural domains, F(1) containing the extramembraneous catalytic core and F(0) containing the membrane proton channel, linked together by a central stalk and a peripheral stalk. During catalysis, ATP synthesis in the catalytic domain of F(1) is coupled via a rotary mechanism of the central stalk subunits to proton translocation. Component of the F(0) channel, it forms part of the peripheral stalk, linking F(1) to F(0). The chain is ATP synthase subunit b 1 from Bradyrhizobium sp. (strain BTAi1 / ATCC BAA-1182).